The primary structure comprises 268 residues: Glucosamine-6-phosphate deaminase (268 aa).

D72 functions as the Proton acceptor; for enolization step in the catalytic mechanism. D141 acts as the For ring-opening step in catalysis. H143 (proton acceptor; for ring-opening step) is an active-site residue. The For ring-opening step role is filled by E148.

This sequence belongs to the glucosamine/galactosamine-6-phosphate isomerase family. NagB subfamily. As to quaternary structure, homohexamer.

It carries out the reaction alpha-D-glucosamine 6-phosphate + H2O = beta-D-fructose 6-phosphate + NH4(+). The protein operates within amino-sugar metabolism; N-acetylneuraminate degradation; D-fructose 6-phosphate from N-acetylneuraminate: step 5/5. Allosterically activated by N-acetylglucosamine 6-phosphate (GlcNAc6P). In terms of biological role, catalyzes the reversible isomerization-deamination of glucosamine 6-phosphate (GlcN6P) to form fructose 6-phosphate (Fru6P) and ammonium ion. This is Glucosamine-6-phosphate deaminase from Proteus mirabilis (strain HI4320).